The chain runs to 403 residues: Argininosuccinate synthase (403 aa).

An ATP-binding site is contributed by 10–18 (AYSGGLDTS). Residue Tyr-87 coordinates L-citrulline. Position 117 (Gly-117) interacts with ATP. 3 residues coordinate L-aspartate: Thr-119, Asn-123, and Asp-124. Asn-123 is an L-citrulline binding site. Positions 127, 175, 184, 260, and 272 each coordinate L-citrulline.

Belongs to the argininosuccinate synthase family. Type 1 subfamily. In terms of assembly, homotetramer.

The protein resides in the cytoplasm. The catalysed reaction is L-citrulline + L-aspartate + ATP = 2-(N(omega)-L-arginino)succinate + AMP + diphosphate + H(+). It functions in the pathway amino-acid biosynthesis; L-arginine biosynthesis; L-arginine from L-ornithine and carbamoyl phosphate: step 2/3. This chain is Argininosuccinate synthase, found in Bacillus licheniformis (strain ATCC 14580 / DSM 13 / JCM 2505 / CCUG 7422 / NBRC 12200 / NCIMB 9375 / NCTC 10341 / NRRL NRS-1264 / Gibson 46).